Here is a 561-residue protein sequence, read N- to C-terminus: Potassium-transporting ATPase potassium-binding subunit (561 aa).

Helical transmembrane passes span 1 to 21 (MMAS…LLAR), 62 to 82 (YLLA…LILM), 132 to 152 (GLTV…FALM), 173 to 193 (ITLY…VSQG), 253 to 273 (FVQM…FGDV), 283 to 303 (LLWS…WAEV), 327 to 347 (FGIL…CGAV), 356 to 376 (ALGG…FGGV), 379 to 399 (GLYG…LMIG), 416 to 436 (MTAL…ALAM), 483 to 503 (MLLA…VLAI), and 526 to 546 (LFIA…FIPA).

Belongs to the KdpA family. As to quaternary structure, the system is composed of three essential subunits: KdpA, KdpB and KdpC.

The protein localises to the cell inner membrane. In terms of biological role, part of the high-affinity ATP-driven potassium transport (or Kdp) system, which catalyzes the hydrolysis of ATP coupled with the electrogenic transport of potassium into the cytoplasm. This subunit binds the periplasmic potassium ions and delivers the ions to the membrane domain of KdpB through an intramembrane tunnel. The sequence is that of Potassium-transporting ATPase potassium-binding subunit from Erwinia tasmaniensis (strain DSM 17950 / CFBP 7177 / CIP 109463 / NCPPB 4357 / Et1/99).